We begin with the raw amino-acid sequence, 319 residues long: Coiled-coil domain-containing protein PF3D7_1144200 (319 aa).

Positions 1–12 (MSEEHSNDHIED) are enriched in basic and acidic residues. 2 disordered regions span residues 1 to 43 (MSEE…SESS) and 112 to 158 (KLEK…NQHN). The span at 16-26 (CSQNCDETNSP) shows a compositional bias: polar residues. Composition is skewed to basic and acidic residues over residues 27–36 (KNEKDEKDFK) and 112–131 (KLEK…KKVT). 3 coiled-coil regions span residues 100 to 134 (DLAN…TNDS), 166 to 242 (ELNE…IKKN), and 281 to 310 (NSNC…LINI). Over residues 132 to 150 (NDSTNNKNKNNSVPFLNEN) the composition is skewed to low complexity.

The sequence is that of Coiled-coil domain-containing protein PF3D7_1144200 from Plasmodium falciparum (isolate 3D7).